Reading from the N-terminus, the 261-residue chain is Malonyl-[acyl-carrier protein] O-methyltransferase (261 aa).

The protein belongs to the methyltransferase superfamily.

It carries out the reaction malonyl-[ACP] + S-adenosyl-L-methionine = malonyl-[ACP] methyl ester + S-adenosyl-L-homocysteine. Its pathway is cofactor biosynthesis; biotin biosynthesis. Functionally, converts the free carboxyl group of a malonyl-thioester to its methyl ester by transfer of a methyl group from S-adenosyl-L-methionine (SAM). It allows to synthesize pimeloyl-ACP via the fatty acid synthetic pathway. This Bacteroides thetaiotaomicron (strain ATCC 29148 / DSM 2079 / JCM 5827 / CCUG 10774 / NCTC 10582 / VPI-5482 / E50) protein is Malonyl-[acyl-carrier protein] O-methyltransferase.